Reading from the N-terminus, the 305-residue chain is NDP-polyphosphate phosphotransferase 1 (305 aa).

Belongs to the polyphosphate kinase 2 (PPK2) family. Class I subfamily.

The enzyme catalyses [phosphate](n) + ATP = [phosphate](n+1) + ADP. It carries out the reaction [phosphate](n) + CTP = [phosphate](n+1) + CDP. The catalysed reaction is [phosphate](n) + GTP = [phosphate](n+1) + GDP. It catalyses the reaction [phosphate](n) + UTP = [phosphate](n+1) + UDP. Its activity is regulated as follows. Shows little dependence on metals. Functionally, uses inorganic polyphosphate (polyP) as a donor to convert NDP to NTP. PolyP hydrolysis is slightly faster with GDP, but it can also use ADP, CDP and UDP. In Ruegeria pomeroyi (strain ATCC 700808 / DSM 15171 / DSS-3) (Silicibacter pomeroyi), this protein is NDP-polyphosphate phosphotransferase 1.